Reading from the N-terminus, the 367-residue chain is MTGKKLKEGFTTGACSAAAAKAATRLLLKGKPILEIETTLPNKRQVLFTVKRCQLEGEIATCSVVKDAGDDPDCTHGAELTARVRLTKENEIKLKGGDGVAVVTKAGLGLEIGQSAINPIPRKNIKEMILEELQGSSFNGAEVEISVPGGQEMAKKTMNERLGLIGGISILGTTGIVKPYSTAAFKASVIQAIQMAKEYGIDTIVLTTGGKSEKFAMDLLPNLNELSFIQVGDFIGTGIKTSVKESIRHTIIVGMIGKLSKMADGVMMTHRGGSSVNTTMLSTIARSIGVPEEIAIEIQNANTARHVLEICKVSGYKIITTKICEIVAEKCSKHAGTNIMISCYMVDFDGKLLGKCENFSPNVGLNL.

This sequence belongs to the CbiD family.

The enzyme catalyses Co-precorrin-5B + S-adenosyl-L-methionine = Co-precorrin-6A + S-adenosyl-L-homocysteine. The protein operates within cofactor biosynthesis; adenosylcobalamin biosynthesis; cob(II)yrinate a,c-diamide from sirohydrochlorin (anaerobic route): step 6/10. Functionally, catalyzes the methylation of C-1 in cobalt-precorrin-5B to form cobalt-precorrin-6A. The polypeptide is Cobalt-precorrin-5B C(1)-methyltransferase (Leptospira interrogans serogroup Icterohaemorrhagiae serovar Lai (strain 56601)).